Consider the following 337-residue polypeptide: Nucleoid-associated protein HS_0228 (337 aa).

This sequence belongs to the YejK family.

Its subcellular location is the cytoplasm. The protein localises to the nucleoid. This Histophilus somni (strain 129Pt) (Haemophilus somnus) protein is Nucleoid-associated protein HS_0228.